A 256-amino-acid polypeptide reads, in one-letter code: Floral homeotic protein APETALA 1 (256 aa).

The region spanning 1–61 (MGRGRVQLKR…GKLFEYSTDS (61 aa)) is the MADS-box domain. Positions 88 to 178 (NTNWSMEYNR…SKQIKEREKI (91 aa)) constitute a K-box domain. A coiled-coil region spans residues 88–185 (NTNWSMEYNR…EKILRAQQEQ (98 aa)).

In terms of assembly, homodimer capable of binding to CArG-box sequences. Heterodimer with SEP3, AP1 and SVP. Binds AP3/PI to form a ternary complex. Interacts with the SEU-LUG corepressor complex when complexed to AGL24 or SVP. Interacts with AGL15 and AGL16. Interacts with TT16/AGL32. Expressed in young flower primordia, later becomes localized to sepals and petals.

It is found in the nucleus. Transcription factor that promotes early floral meristem identity in synergy with LEAFY. Is required subsequently for the transition of an inflorescence meristem into a floral meristem. Is indispensable for normal development of sepals and petals in flowers. Positively regulates the B class homeotic proteins APETALA3 and PISTILLATA with the cooperation of LEAFY and UFO. Interacts with SEPALLATA3 or AP3/PI heterodimer to form complexes that could be involved in genes regulation during floral meristem development. Positively regulates AGAMOUS in cooperation with LEAFY. Displays a redundant function with CAULIFLOWER in the up-regulation of LEAFY. Together with AGL24 and SVP, controls the identity of the floral meristem and regulates expression of class B, C and E genes. Represses flowering time genes AGL24, SVP and SOC1 in emerging floral meristems. The protein is Floral homeotic protein APETALA 1 (AP1) of Arabidopsis thaliana (Mouse-ear cress).